The chain runs to 269 residues: Putative carbamate hydrolase RutD (269 aa).

The 119-residue stretch at 26–144 folds into the AB hydrolase-1 domain; it reads VVLLSSGLGG…CFDTRLHLLN (119 aa).

The protein belongs to the AB hydrolase superfamily. Hydrolase RutD family.

It carries out the reaction carbamate + 2 H(+) = NH4(+) + CO2. Its function is as follows. Involved in pyrimidine catabolism. May facilitate the hydrolysis of carbamate, a reaction that can also occur spontaneously. In Caulobacter vibrioides (strain ATCC 19089 / CIP 103742 / CB 15) (Caulobacter crescentus), this protein is Putative carbamate hydrolase RutD.